A 158-amino-acid polypeptide reads, in one-letter code: Putative peptidoglycan-binding-like protein (158 aa).

The first 24 residues, 1 to 24, serve as a signal peptide directing secretion; sequence MRSPKVKFLTIFTFCIFITKMSFA.

It belongs to the IagB/IpgF/P19 family.

It localises to the periplasm. The chain is Putative peptidoglycan-binding-like protein (pbl) from Escherichia coli (strain K12).